Consider the following 205-residue polypeptide: Ferritin heavy chain (205 aa).

An N-terminal signal peptide occupies residues 1 to 19 (MVKLIASLLLLAVVAQAYG). The Ferritin-like diiron domain occupies 35 to 190 (VDMKDACIKG…GKLTTLKKMM (156 aa)). Cys41 and Cys150 are disulfide-bonded. Residues Glu52, Glu87, His90, Glu136, and Gln172 each coordinate Fe cation.

This sequence belongs to the ferritin family. In terms of assembly, oligomer of 12 light (L) chains and 12 heavy (H) chains; L and H chains are disulfide-linked. The functional molecule forms a roughly spherical shell with a diameter of 12 nm and contains a central cavity into which the insoluble ferric iron core is deposited. As to expression, expressed in hemolymph and gut (at protein level). Expressed in the head (at protein level). Expressed in thorax and abdomen.

It localises to the golgi apparatus. Its subcellular location is the secreted. The enzyme catalyses 4 Fe(2+) + O2 + 4 H(+) = 4 Fe(3+) + 2 H2O. Functionally, stores iron in a soluble, non-toxic, readily available form. Important for iron homeostasis. Iron is taken up in the ferrous form and deposited as ferric hydroxides after oxidation. Ferritin is composed of a heavy (H) chain which is responsible for the oxidation and uptake of ferrous iron, and a light (L) chain which facilitates the nucleation of the ferrihydrite iron core. Required for dietary iron absorption in the midgut. Involved in tissue iron detoxification by exporting excess iron. Functions as an antioxidant and protects the developing organs from cell-mediated ferroptosis. Required for embryo and larval development. Plays a role in blood cell (haemocyte) differentiation in the lymph gland at the larval stage. May also store Zn(2+) and Mn(2+) and thus may play a role in zinc and manganese homeostasis. The protein is Ferritin heavy chain of Drosophila melanogaster (Fruit fly).